A 307-amino-acid polypeptide reads, in one-letter code: N-acetylmuramic acid 6-phosphate etherase (307 aa).

The region spanning Ile62–Lys225 is the SIS domain. The active-site Proton donor is Glu90. Residue Glu121 is part of the active site.

This sequence belongs to the GCKR-like family. MurNAc-6-P etherase subfamily. As to quaternary structure, homodimer.

It carries out the reaction N-acetyl-D-muramate 6-phosphate + H2O = N-acetyl-D-glucosamine 6-phosphate + (R)-lactate. Its pathway is amino-sugar metabolism; 1,6-anhydro-N-acetylmuramate degradation. It participates in amino-sugar metabolism; N-acetylmuramate degradation. The protein operates within cell wall biogenesis; peptidoglycan recycling. Functionally, specifically catalyzes the cleavage of the D-lactyl ether substituent of MurNAc 6-phosphate, producing GlcNAc 6-phosphate and D-lactate. Together with AnmK, is also required for the utilization of anhydro-N-acetylmuramic acid (anhMurNAc) either imported from the medium or derived from its own cell wall murein, and thus plays a role in cell wall recycling. The polypeptide is N-acetylmuramic acid 6-phosphate etherase (Mesorhizobium japonicum (strain LMG 29417 / CECT 9101 / MAFF 303099) (Mesorhizobium loti (strain MAFF 303099))).